Here is a 72-residue protein sequence, read N- to C-terminus: Translation initiation factor IF-1 (72 aa).

In terms of domain architecture, S1-like spans 1–72 (MTKEDCIEMQ…SKGRIIFRSR (72 aa)).

The protein belongs to the IF-1 family. In terms of assembly, component of the 30S ribosomal translation pre-initiation complex which assembles on the 30S ribosome in the order IF-2 and IF-3, IF-1 and N-formylmethionyl-tRNA(fMet); mRNA recruitment can occur at any time during PIC assembly.

The protein resides in the cytoplasm. Its function is as follows. One of the essential components for the initiation of protein synthesis. Stabilizes the binding of IF-2 and IF-3 on the 30S subunit to which N-formylmethionyl-tRNA(fMet) subsequently binds. Helps modulate mRNA selection, yielding the 30S pre-initiation complex (PIC). Upon addition of the 50S ribosomal subunit IF-1, IF-2 and IF-3 are released leaving the mature 70S translation initiation complex. This is Translation initiation factor IF-1 from Buchnera aphidicola subsp. Baizongia pistaciae (strain Bp).